A 475-amino-acid chain; its full sequence is Squamosa promoter-binding-like protein 12 (475 aa).

The segment at 49-73 (NHGSTNSSGGTFTSSSELANGSSKS) is disordered. Over residues 51–73 (GSTNSSGGTFTSSSELANGSSKS) the composition is skewed to low complexity. The SBP-type zinc-finger motif lies at 177-254 (SSYCQVEGCK…SDHNARRRKP (78 aa)). 8 residues coordinate Zn(2+): Cys-180, Cys-185, Cys-202, His-205, Cys-221, Cys-224, His-228, and Cys-240. The short motif at 237-253 (KKSCRRRLSDHNARRRK) is the Bipartite nuclear localization signal element. A disordered region spans residues 437–475 (GGGGFWQDGDDPPPLDHASQAQAFMHPGNGSSSGYGHLH). The segment covering 465 to 475 (NGSSSGYGHLH) has biased composition (polar residues).

As to expression, expressed in young panicles.

It is found in the nucleus. In terms of biological role, trans-acting factor that binds specifically to the consensus nucleotide sequence 5'-TNCGTACAA-3'. May be involved in panicle development. This chain is Squamosa promoter-binding-like protein 12 (SPL12), found in Oryza sativa subsp. indica (Rice).